Consider the following 740-residue polypeptide: Protein SMY2 (740 aa).

Ser12 and Ser96 each carry phosphoserine. Thr129 is subject to Phosphothreonine. In terms of domain architecture, GYF spans 205 to 261 (ESSWRYIDTQGQIHGPFTTQMMSQWYIGGYFASTLQISRLGSTPETLGINDIFITLG). Phosphothreonine is present on Thr311. Disordered regions lie at residues 346–510 (ISQT…KEEL), 523–548 (PSNQ…SPLK), and 567–592 (QSSS…VTSK). Residues 364 to 439 (EKGKKEKSES…KKSEKTKKDT (76 aa)) show a composition bias toward basic and acidic residues. Residues 369–440 (EKSESVAKAL…KSEKTKKDTQ (72 aa)) are a coiled coil. A compositionally biased stretch (low complexity) spans 452–467 (LPSLNSSSANPAPWAS). Over residues 474 to 486 (AIETSIKNGVSST) the composition is skewed to polar residues. Residues 500-510 (NSKEEKQKEEL) show a composition bias toward basic and acidic residues. Over residues 523–536 (PSNQTIDIKSQFQK) the composition is skewed to polar residues. Residue Ser545 is modified to Phosphoserine. Ser602 is modified (phosphoserine).

The protein belongs to the SMY2/mpd2 family. In terms of assembly, interacts with EAP1 and MSL5 (via the GYP domain).

Its subcellular location is the cytoplasm. Functionally, suppressor of the MYO2 gene. The polypeptide is Protein SMY2 (SMY2) (Saccharomyces cerevisiae (strain ATCC 204508 / S288c) (Baker's yeast)).